A 307-amino-acid polypeptide reads, in one-letter code: Small ribosomal subunit biogenesis GTPase RsgA (307 aa).

The tract at residues 1–21 (MPSEHPFSDGIPTPNPKETMN) is disordered. Residues 85–242 (RQDAWKTKLI…LIDSPGLQEF (158 aa)) form the CP-type G domain. Residues 135–138 (NKAD) and 184–192 (GQSGMGKST) each bind GTP. Zn(2+) contacts are provided by Cys266, Cys271, His273, and Cys279.

The protein belongs to the TRAFAC class YlqF/YawG GTPase family. RsgA subfamily. As to quaternary structure, monomer. Associates with 30S ribosomal subunit, binds 16S rRNA. The cofactor is Zn(2+).

It is found in the cytoplasm. One of several proteins that assist in the late maturation steps of the functional core of the 30S ribosomal subunit. Helps release RbfA from mature subunits. May play a role in the assembly of ribosomal proteins into the subunit. Circularly permuted GTPase that catalyzes slow GTP hydrolysis, GTPase activity is stimulated by the 30S ribosomal subunit. The polypeptide is Small ribosomal subunit biogenesis GTPase RsgA (Neisseria meningitidis serogroup B (strain ATCC BAA-335 / MC58)).